The sequence spans 763 residues: Putative alpha-1,3-mannosyltransferase MNN15 (763 aa).

Residues 1 to 7 (MRFTLKK) lie on the Cytoplasmic side of the membrane. A helical membrane pass occupies residues 8–28 (IFFVFLTLLIISIGYLLLQSV). At 29-763 (DLQRIRELLH…KDATTVRLRI (735 aa)) the chain is on the lumenal side. 3 N-linked (GlcNAc...) asparagine glycosylation sites follow: N71, N157, and N169. Positions 617 to 659 (LVPPDLPNQREPGSPPDTKPEMEFRKSWKSRKKDTDEINEKLP) are disordered. Over residues 649-659 (KDTDEINEKLP) the composition is skewed to basic and acidic residues.

It belongs to the MNN1/MNT family.

The protein localises to the golgi apparatus membrane. It functions in the pathway protein modification; protein glycosylation. Responsible for addition of the terminal mannose residues to the outer chain of core N-linked polysaccharides and to O-linked mannotriose. Implicated in late Golgi modifications. The protein is Putative alpha-1,3-mannosyltransferase MNN15 (MNN15) of Candida albicans (strain SC5314 / ATCC MYA-2876) (Yeast).